The chain runs to 369 residues: Nudix hydrolase 8 (369 aa).

In terms of domain architecture, Nudix hydrolase spans 188-318 (SHQVGVGGFV…GDKMFKRVIE (131 aa)). Residues 225–246 (GFINESEEIFSGAVREVKEETG) carry the Nudix box motif. Residues glutamate 240 and glutamate 244 each contribute to the Mg(2+) site.

This sequence belongs to the Nudix hydrolase family. Mg(2+) serves as cofactor. It depends on Mn(2+) as a cofactor. In terms of tissue distribution, expressed in roots, stems and, at lower level, leaves.

Functionally, probably mediates the hydrolysis of some nucleoside diphosphate derivatives. May be involved in plant immunity and act as a positive regulator of defense response through salicylic acid (SA) signaling. The chain is Nudix hydrolase 8 (NUDT8) from Arabidopsis thaliana (Mouse-ear cress).